The primary structure comprises 617 residues: MSIKQLSETLINQIAAGEVIERPASAAKELIENAIDAGASRIEIATAGGGKALLRITDNGCGMDGQDLALAVRRHCTSKLNESLMDIKSLGFRGEALPSIGSVARLTIASRRADSASAFQIAVEGGKVGEVRPAPGNPGTVVEVRDLFFATPARLKFLKTERAEAAAITEMVKRMAIAFPKIRFVLSGSDRSTLELPATGDDHLARIAQVLGPDFRDNAIALDAEREDVHLGGFAGVPTFNRGNSAHQYAFVNGRPVQDKLILSAIRGAYAETVPHGRYPVAVLALTVDPALVDVNVHPAKSDVRFRDPGLVRGLIVGAIRQSLTREGDRSSTAGAGAMLRAFRPGANGGFSEGAQAAANNSYAPAYGARPPQPSAWSVDTSPHRPLDDGQNRFDGLALPAARADAHVSPSQISEPVAMAMESGRFRLGAARAQVHANYIVAQTQDGLVIVDQHAAHERLVFEDMRKALSGRRLPSQGLLIPEIIGLPEEDCDRLMDHAENLDRLGLAIERFGPGAIAVRETPAMLGEVDVPGLVRQLADEIAEWETAGSLFARLEHVAATMACHGSVRSGRLLRVEEMNALLRKMEETPGSGQCNHGRPTYIELKLSDIERLFGRS.

A disordered region spans residues 363 to 394 (YAPAYGARPPQPSAWSVDTSPHRPLDDGQNRF). Residues 382–392 (SPHRPLDDGQN) are compositionally biased toward basic and acidic residues.

It belongs to the DNA mismatch repair MutL/HexB family.

Functionally, this protein is involved in the repair of mismatches in DNA. It is required for dam-dependent methyl-directed DNA mismatch repair. May act as a 'molecular matchmaker', a protein that promotes the formation of a stable complex between two or more DNA-binding proteins in an ATP-dependent manner without itself being part of a final effector complex. The chain is DNA mismatch repair protein MutL from Allorhizobium ampelinum (strain ATCC BAA-846 / DSM 112012 / S4) (Agrobacterium vitis (strain S4)).